Consider the following 152-residue polypeptide: ESAT-6 secretion machinery protein EssA (152 aa).

Topologically, residues 1 to 114 (MLMNSVIALT…PYIQNKQEKK (114 aa)) are cytoplasmic. The helical transmembrane segment at 115-135 (IFPYILMSVGAFLTLGFVIFS) threads the bilayer. The Extracellular segment spans residues 136 to 152 (IHKGRRTKNESARKSNI).

This sequence belongs to the EssA family.

It localises to the cell membrane. Component of the ESAT-6 secretion system (Ess). Required for the secretion of EsxA and EsxB. The protein is ESAT-6 secretion machinery protein EssA of Staphylococcus aureus (strain Mu50 / ATCC 700699).